The chain runs to 147 residues: Prefoldin subunit alpha 2 (147 aa).

This sequence belongs to the prefoldin subunit alpha family. As to quaternary structure, heterohexamer of two alpha and four beta subunits.

Its subcellular location is the cytoplasm. Molecular chaperone capable of stabilizing a range of proteins. Seems to fulfill an ATP-independent, HSP70-like function in archaeal de novo protein folding. The polypeptide is Prefoldin subunit alpha 2 (pfdA2) (Methanocaldococcus jannaschii (strain ATCC 43067 / DSM 2661 / JAL-1 / JCM 10045 / NBRC 100440) (Methanococcus jannaschii)).